The sequence spans 161 residues: Phosphopantetheine adenylyltransferase (161 aa).

Thr-10 is a binding site for substrate. ATP contacts are provided by residues 10–11 and His-18; that span reads TF. Substrate-binding residues include Lys-42, Met-74, and Arg-88. ATP is bound by residues 89–91, Glu-99, and 124–130; these read GLR and WSFISSS.

This sequence belongs to the bacterial CoaD family. In terms of assembly, homohexamer. It depends on Mg(2+) as a cofactor.

Its subcellular location is the cytoplasm. It catalyses the reaction (R)-4'-phosphopantetheine + ATP + H(+) = 3'-dephospho-CoA + diphosphate. It participates in cofactor biosynthesis; coenzyme A biosynthesis; CoA from (R)-pantothenate: step 4/5. Reversibly transfers an adenylyl group from ATP to 4'-phosphopantetheine, yielding dephospho-CoA (dPCoA) and pyrophosphate. The sequence is that of Phosphopantetheine adenylyltransferase from Edwardsiella ictaluri (strain 93-146).